The sequence spans 336 residues: Type II methyltransferase M2.HphI (336 aa).

Belongs to the N(4)/N(6)-methyltransferase family.

It carries out the reaction a 2'-deoxyadenosine in DNA + S-adenosyl-L-methionine = an N(6)-methyl-2'-deoxyadenosine in DNA + S-adenosyl-L-homocysteine + H(+). In terms of biological role, an alpha subtype methylase that recognizes the double-stranded sequence 5'-GGTGA-3', probably methylates A-5 on the top strand, and protects the DNA from cleavage by the HphI endonuclease. This Haemophilus parahaemolyticus protein is Type II methyltransferase M2.HphI (hphIBM).